The sequence spans 578 residues: Cytochrome P450 monooxygenase fsoE (578 aa).

The chain crosses the membrane as a helical span at residues 28–48; that stretch reads LLMAVAITYAISWINWFFTSW. Cys517 lines the heme pocket.

This sequence belongs to the cytochrome P450 family. It depends on heme as a cofactor.

The protein localises to the membrane. It carries out the reaction 3-O-(beta-D-glucopyranosyl)-isomotiol + 2 reduced [NADPH--hemoprotein reductase] + 2 O2 = 2-deacetoxyfuscoatroside + 2 oxidized [NADPH--hemoprotein reductase] + 2 H2O + 3 H(+). It catalyses the reaction 3-O-(beta-D-glucopyranosyl)-2alpha-hydroxyisomotiol + 2 reduced [NADPH--hemoprotein reductase] + 2 O2 = 2-deacetylfuscoatroside + 2 oxidized [NADPH--hemoprotein reductase] + 2 H2O + 3 H(+). The catalysed reaction is 3-O-(beta-D-glucopyranosyl)-2alpha-acetoxyisomotiol + 2 reduced [NADPH--hemoprotein reductase] + 2 O2 = fuscoatroside + 2 oxidized [NADPH--hemoprotein reductase] + 2 H2O + 3 H(+). The enzyme catalyses isomotiol + reduced [NADPH--hemoprotein reductase] + O2 = 19beta-hydroxyisomotiol + oxidized [NADPH--hemoprotein reductase] + H2O + H(+). It carries out the reaction 2alpha-hydroxyisomotiol + reduced [NADPH--hemoprotein reductase] + O2 = 2alpha,19beta-dihydroxyisomotiol + oxidized [NADPH--hemoprotein reductase] + H2O + H(+). It catalyses the reaction 2alpha,19beta-dihydroxyisomotiol + reduced [NADPH--hemoprotein reductase] + O2 = 2alpha-hydroxyismotiol-19-one + oxidized [NADPH--hemoprotein reductase] + 2 H2O + H(+). The catalysed reaction is 2alpha-hydroxyismotiol-19-one + 2 reduced [NADPH--hemoprotein reductase] + O2 = 2-deacetyl,3-deglucopyranosyl-fuscoatroside + 2 oxidized [NADPH--hemoprotein reductase] + H2O + 3 H(+). It functions in the pathway secondary metabolite biosynthesis; terpenoid biosynthesis. Cytochrome P450 monooxygenase; part of the gene cluster that mediates the biosynthesis of the enfumafungin-type antibiotic, fuscoatroside. Within the pathway, fsoE catalyzes the oxidative cleavage of the c19-C20 bond within the E-ring, resulting in the formation of a carboxyl group and a methyl group. FsoE exhibits preferential substrate selectivity toward glycoside substrates over their aglycones. The fuscoatroside biosynthesis is initiated by the cyclization of 2,3(S)-oxidosqualene through FsoA's terpene cyclase (TC) domain, leading to the formation of the fernane skeleton isomotiol, harboring a fernane triterpene skeleton with a C8-C9 double bond. Subsequently, C2-alpha-hydroxylation mediated by fsoD results in the production of 2-alpha-hydroxy-isomotiol, which is further acetylated by fsoF. The glycosyltransferase (GT) domain of FsoA may convert isomotiol, 2-alpha-hydroxy-isomotiol, and the acetylated derivative of 2-alpha-hydroxy-isomotiol into their corresponding glycosides 3-O-(beta-D-glucopyranosyl)-isomotiol, 3-O-(beta-D-glucopyranosyl)-2-alpha-hydroxy-isomotiol, and 3-O-(beta-D-glucopyranosyl)-2-alpha-acetoxy-isomotiol, which then undergo oxidative cleavage under the action of fsoE to form s 2-deacetoxy-fuscoatroside, 2-deacetyl-fuscoatroside, and fuscoatroside, respectively. Although hydroxylation followed by acetylation of 3-O-(beta-D-glucopyranosyl)-isomotiol and 2-deacetoxy-fuscoatroside by fsoD and fsoF could not be ruled out, this process is likely to occur with difficulty due to bulky steric hindrance caused by the presence of a glycan at C3 in these compounds. Interestingly, fsoE can also utilize the aglycones isomotiol and 2-alpha-hydroxy-isomotiol as substrates to generate 19-beta-hydroxy-isomotiol and 2-alpha,19-beta-dihydroxy-isomotiol, respectively. These reactions occur with lower efficiency. Finally, fsoE can further convert 2-alpha,19-beta-dihydroxy-isomotiol into 2-alpha-hydroxy-ismotiol-19-one and 2-alpha-hydroxy-ismotiol-19-one into 2-deacetyl-3-deglucopyranosyl-fuscoatroside. This is Cytochrome P450 monooxygenase fsoE from Humicola fuscoatra.